The following is a 107-amino-acid chain: Transmembrane protein 213 (107 aa).

An N-terminal signal peptide occupies residues 1 to 27 (MQRLPAATRATLILSLAFASLHSACSA). Residues 28-70 (EASSSNSSSLTAHHPDPGTLEQCLNVDFCPQAARCCRTGVDEY) are Extracellular-facing. Residues 71 to 91 (GWIAAAVGWSLWFLTLILLCV) traverse the membrane as a helical segment. At 92 to 107 (DKLMKLTPDEPKDLQA) the chain is on the cytoplasmic side.

It localises to the membrane. The polypeptide is Transmembrane protein 213 (TMEM213) (Homo sapiens (Human)).